A 382-amino-acid chain; its full sequence is Protein farnesyltransferase subunit beta (382 aa).

PFTB repeat units follow at residues 78-119 (CERA…CLCD), 129-170 (RDRL…SLVG), 178-219 (FEGT…ALLG), 226-268 (EIKL…VIVA), and 286-328 (PEKL…SSIA). (2E,6E)-farnesyl diphosphate-binding positions include 204-207 (HGGY) and 247-250 (RSNK). Positions 253 and 255 each coordinate Zn(2+). Residue 256-259 (YSWW) participates in (2E,6E)-farnesyl diphosphate binding. Histidine 316 is a Zn(2+) binding site.

Belongs to the protein prenyltransferase subunit beta family. In terms of assembly, heterodimer of an alpha(cwp1) and a beta(cpp1) subunit. Requires Zn(2+) as cofactor.

It catalyses the reaction L-cysteinyl-[protein] + (2E,6E)-farnesyl diphosphate = S-(2E,6E)-farnesyl-L-cysteinyl-[protein] + diphosphate. Functionally, catalyzes the transfer of a farnesyl moiety from farnesyl diphosphate to a cysteine at the fourth position from the C-terminus of several proteins. The beta(cpp1) subunit is responsible for peptide-binding. The chain is Protein farnesyltransferase subunit beta (cpp1) from Schizosaccharomyces pombe (strain 972 / ATCC 24843) (Fission yeast).